The following is a 463-amino-acid chain: Chromosomal replication initiator protein DnaA (463 aa).

The interval Met-1–Ile-83 is domain I, interacts with DnaA modulators. A domain II region spans residues Ile-83 to Ser-126. A domain III, AAA+ region region spans residues Asn-127–Ala-343. ATP-binding residues include Gly-171, Gly-173, Lys-174, and Thr-175. Residues Asn-344–Ser-463 form a domain IV, binds dsDNA region.

It belongs to the DnaA family. In terms of assembly, oligomerizes as a right-handed, spiral filament on DNA at oriC.

The protein resides in the cytoplasm. Its function is as follows. Plays an essential role in the initiation and regulation of chromosomal replication. ATP-DnaA binds to the origin of replication (oriC) to initiate formation of the DNA replication initiation complex once per cell cycle. Binds the DnaA box (a 9 base pair repeat at the origin) and separates the double-stranded (ds)DNA. Forms a right-handed helical filament on oriC DNA; dsDNA binds to the exterior of the filament while single-stranded (ss)DNA is stabiized in the filament's interior. The ATP-DnaA-oriC complex binds and stabilizes one strand of the AT-rich DNA unwinding element (DUE), permitting loading of DNA polymerase. After initiation quickly degrades to an ADP-DnaA complex that is not apt for DNA replication. Binds acidic phospholipids. This chain is Chromosomal replication initiator protein DnaA, found in Edwardsiella ictaluri (strain 93-146).